A 156-amino-acid polypeptide reads, in one-letter code: Ribosomal RNA large subunit methyltransferase H (156 aa).

S-adenosyl-L-methionine contacts are provided by residues Leu-72, Gly-104, and 123-128; that span reads FGAMVW.

The protein belongs to the RNA methyltransferase RlmH family. In terms of assembly, homodimer.

It is found in the cytoplasm. The enzyme catalyses pseudouridine(1915) in 23S rRNA + S-adenosyl-L-methionine = N(3)-methylpseudouridine(1915) in 23S rRNA + S-adenosyl-L-homocysteine + H(+). Its function is as follows. Specifically methylates the pseudouridine at position 1915 (m3Psi1915) in 23S rRNA. The protein is Ribosomal RNA large subunit methyltransferase H of Dinoroseobacter shibae (strain DSM 16493 / NCIMB 14021 / DFL 12).